The primary structure comprises 65 residues: Protein MalX (65 aa).

The protein is Protein MalX (malX) of Klebsiella pneumoniae.